The following is a 232-amino-acid chain: Large ribosomal subunit protein uL1 (232 aa).

The protein belongs to the universal ribosomal protein uL1 family. In terms of assembly, part of the 50S ribosomal subunit.

Its function is as follows. Binds directly to 23S rRNA. The L1 stalk is quite mobile in the ribosome, and is involved in E site tRNA release. In terms of biological role, protein L1 is also a translational repressor protein, it controls the translation of the L11 operon by binding to its mRNA. The protein is Large ribosomal subunit protein uL1 of Rhizobium meliloti (strain 1021) (Ensifer meliloti).